We begin with the raw amino-acid sequence, 272 residues long: FAS1 domain-containing protein YDR262W (272 aa).

The signal sequence occupies residues 1-26; that stretch reads MIFNLPVSVLLYFSLIWAMEPSFVRG. One can recognise an FAS1 domain in the interval 100–269; sequence PLSLESKLSL…GVILMVDFTL (170 aa).

Its subcellular location is the vacuole. This Saccharomyces cerevisiae (strain ATCC 204508 / S288c) (Baker's yeast) protein is FAS1 domain-containing protein YDR262W.